Here is a 477-residue protein sequence, read N- to C-terminus: Ribulose bisphosphate carboxylase large chain (477 aa).

Positions 1–2 are excised as a propeptide; the sequence is MS. An N-acetylproline modification is found at proline 3. Residue lysine 14 is modified to N6,N6,N6-trimethyllysine. Residues asparagine 123 and threonine 173 each contribute to the substrate site. Lysine 175 acts as the Proton acceptor in catalysis. Residue lysine 177 participates in substrate binding. Mg(2+) is bound by residues lysine 201, aspartate 203, and glutamate 204. Lysine 201 is modified (N6-carboxylysine). Catalysis depends on histidine 294, which acts as the Proton acceptor. Residues arginine 295, histidine 327, and serine 379 each coordinate substrate.

Belongs to the RuBisCO large chain family. Type I subfamily. As to quaternary structure, heterohexadecamer of 8 large chains and 8 small chains; disulfide-linked. The disulfide link is formed within the large subunit homodimers. Mg(2+) serves as cofactor. Post-translationally, the disulfide bond which can form in the large chain dimeric partners within the hexadecamer appears to be associated with oxidative stress and protein turnover.

The protein localises to the plastid. It localises to the chloroplast. It catalyses the reaction 2 (2R)-3-phosphoglycerate + 2 H(+) = D-ribulose 1,5-bisphosphate + CO2 + H2O. The enzyme catalyses D-ribulose 1,5-bisphosphate + O2 = 2-phosphoglycolate + (2R)-3-phosphoglycerate + 2 H(+). In terms of biological role, ruBisCO catalyzes two reactions: the carboxylation of D-ribulose 1,5-bisphosphate, the primary event in carbon dioxide fixation, as well as the oxidative fragmentation of the pentose substrate in the photorespiration process. Both reactions occur simultaneously and in competition at the same active site. This Nicotiana otophora (Tobacco) protein is Ribulose bisphosphate carboxylase large chain.